The sequence spans 114 residues: Large ribosomal subunit protein bL19 (114 aa).

This sequence belongs to the bacterial ribosomal protein bL19 family.

This protein is located at the 30S-50S ribosomal subunit interface and may play a role in the structure and function of the aminoacyl-tRNA binding site. This is Large ribosomal subunit protein bL19 from Clostridium botulinum (strain ATCC 19397 / Type A).